Here is a 456-residue protein sequence, read N- to C-terminus: Bifunctional protein GlmU (456 aa).

Residues 1–229 (MLNNAMSVVI…LSEVEGVNNR (229 aa)) form a pyrophosphorylase region. UDP-N-acetyl-alpha-D-glucosamine-binding positions include 11-14 (LAAG), lysine 25, glutamine 76, 81-82 (GT), 103-105 (YGD), glycine 140, glutamate 154, asparagine 169, and asparagine 227. Aspartate 105 serves as a coordination point for Mg(2+). Residue asparagine 227 participates in Mg(2+) binding. The linker stretch occupies residues 230 to 250 (LQLSRLERVYQSEQAEKLLLA). Residues 251–456 (GVMLRDPARF…EGWRRPVKKK (206 aa)) form an N-acetyltransferase region. Residues arginine 333 and lysine 351 each coordinate UDP-N-acetyl-alpha-D-glucosamine. Residue histidine 363 is the Proton acceptor of the active site. Positions 366 and 377 each coordinate UDP-N-acetyl-alpha-D-glucosamine. Acetyl-CoA-binding positions include alanine 380, 386–387 (NY), serine 405, alanine 423, and arginine 440.

This sequence in the N-terminal section; belongs to the N-acetylglucosamine-1-phosphate uridyltransferase family. It in the C-terminal section; belongs to the transferase hexapeptide repeat family. As to quaternary structure, homotrimer. Requires Mg(2+) as cofactor.

It localises to the cytoplasm. The catalysed reaction is alpha-D-glucosamine 1-phosphate + acetyl-CoA = N-acetyl-alpha-D-glucosamine 1-phosphate + CoA + H(+). The enzyme catalyses N-acetyl-alpha-D-glucosamine 1-phosphate + UTP + H(+) = UDP-N-acetyl-alpha-D-glucosamine + diphosphate. Its pathway is nucleotide-sugar biosynthesis; UDP-N-acetyl-alpha-D-glucosamine biosynthesis; N-acetyl-alpha-D-glucosamine 1-phosphate from alpha-D-glucosamine 6-phosphate (route II): step 2/2. It functions in the pathway nucleotide-sugar biosynthesis; UDP-N-acetyl-alpha-D-glucosamine biosynthesis; UDP-N-acetyl-alpha-D-glucosamine from N-acetyl-alpha-D-glucosamine 1-phosphate: step 1/1. It participates in bacterial outer membrane biogenesis; LPS lipid A biosynthesis. Functionally, catalyzes the last two sequential reactions in the de novo biosynthetic pathway for UDP-N-acetylglucosamine (UDP-GlcNAc). The C-terminal domain catalyzes the transfer of acetyl group from acetyl coenzyme A to glucosamine-1-phosphate (GlcN-1-P) to produce N-acetylglucosamine-1-phosphate (GlcNAc-1-P), which is converted into UDP-GlcNAc by the transfer of uridine 5-monophosphate (from uridine 5-triphosphate), a reaction catalyzed by the N-terminal domain. This chain is Bifunctional protein GlmU, found in Shigella boydii serotype 4 (strain Sb227).